The chain runs to 155 residues: Ribosomal RNA large subunit methyltransferase H (155 aa).

S-adenosyl-L-methionine contacts are provided by residues leucine 72, glycine 103, and 122–127 (LSPLTL).

This sequence belongs to the RNA methyltransferase RlmH family. In terms of assembly, homodimer.

The protein resides in the cytoplasm. The catalysed reaction is pseudouridine(1915) in 23S rRNA + S-adenosyl-L-methionine = N(3)-methylpseudouridine(1915) in 23S rRNA + S-adenosyl-L-homocysteine + H(+). In terms of biological role, specifically methylates the pseudouridine at position 1915 (m3Psi1915) in 23S rRNA. This chain is Ribosomal RNA large subunit methyltransferase H, found in Haemophilus influenzae (strain PittEE).